A 322-amino-acid polypeptide reads, in one-letter code: N-acetyl-gamma-glutamyl-phosphate reductase (322 aa).

Cys-132 is a catalytic residue.

This sequence belongs to the NAGSA dehydrogenase family. Type 1 subfamily.

It is found in the cytoplasm. The catalysed reaction is N-acetyl-L-glutamate 5-semialdehyde + phosphate + NADP(+) = N-acetyl-L-glutamyl 5-phosphate + NADPH + H(+). The protein operates within amino-acid biosynthesis; L-arginine biosynthesis; N(2)-acetyl-L-ornithine from L-glutamate: step 3/4. Functionally, catalyzes the NADPH-dependent reduction of N-acetyl-5-glutamyl phosphate to yield N-acetyl-L-glutamate 5-semialdehyde. The polypeptide is N-acetyl-gamma-glutamyl-phosphate reductase (Bacteroides fragilis (strain YCH46)).